A 598-amino-acid chain; its full sequence is uncharacterized protein (598 aa).

This is an uncharacterized protein from Homo sapiens (Human).